Here is a 451-residue protein sequence, read N- to C-terminus: Trigger factor (451 aa).

Residues D170–P256 form the PPIase FKBP-type domain.

This sequence belongs to the FKBP-type PPIase family. Tig subfamily.

Its subcellular location is the cytoplasm. It catalyses the reaction [protein]-peptidylproline (omega=180) = [protein]-peptidylproline (omega=0). Involved in protein export. Acts as a chaperone by maintaining the newly synthesized protein in an open conformation. Functions as a peptidyl-prolyl cis-trans isomerase. This chain is Trigger factor, found in Treponema denticola (strain ATCC 35405 / DSM 14222 / CIP 103919 / JCM 8153 / KCTC 15104).